The following is a 298-amino-acid chain: Inosose dehydratase 2 (298 aa).

It belongs to the IolE/MocC family. Requires glutathione as cofactor. The cofactor is Co(2+). Mn(2+) serves as cofactor.

The catalysed reaction is scyllo-inosose = 3D-3,5/4-trihydroxycyclohexane-1,2-dione + H2O. The protein operates within polyol metabolism; myo-inositol degradation into acetyl-CoA; acetyl-CoA from myo-inositol: step 2/7. In terms of biological role, catalyzes the dehydration of inosose (2-keto-myo-inositol, 2KMI or 2,4,6/3,5-pentahydroxycyclohexanone) to 3D-(3,5/4)-trihydroxycyclohexane-1,2-dione (D-2,3-diketo-4-deoxy-epi-inositol). The chain is Inosose dehydratase 2 from Bacillus cereus (strain ZK / E33L).